A 273-amino-acid chain; its full sequence is Aquaporin NIP1-4 (273 aa).

Helical transmembrane passes span 59–79 (LLAE…AITV) and 86–106 (VTFP…VYAV). The NPA 1 signature appears at 115-117 (NPA). 3 consecutive transmembrane segments (helical) span residues 133–155 (APAY…RLMF), 174–194 (SLVI…AVAT), and 198–218 (AVGH…VLFA). Positions 227–229 (NPA) match the NPA 2 motif. Residues 245-265 (WVYILGPFAGAAAGAWAYSLI) traverse the membrane as a helical segment.

This sequence belongs to the MIP/aquaporin (TC 1.A.8) family. NIP (TC 1.A.8.12) subfamily. In terms of tissue distribution, expressed in leaves.

It is found in the membrane. In terms of biological role, aquaporins facilitate the transport of water and small neutral solutes across cell membranes. This is Aquaporin NIP1-4 (NIP1-4) from Oryza sativa subsp. japonica (Rice).